We begin with the raw amino-acid sequence, 591 residues long: uncharacterized protein (591 aa).

Positions 1–10 (MSIRGVGGNG) are enriched in gly residues. Disordered regions lie at residues 1 to 37 (MSIRGVGGNGNSRIPSHNGDGSNRRSQNTKGNNKVED), 110 to 135 (RSSATRAAESGSSSRTARGASSGYRE), 324 to 344 (EESGWTRESASRMEGDEAQGP), and 487 to 517 (GHYQDPRASDYDLPRASDYDLPRSPYPTPPL). Positions 11–32 (NSRIPSHNGDGSNRRSQNTKGN) are enriched in polar residues. A compositionally biased stretch (low complexity) spans 110-132 (RSSATRAAESGSSSRTARGASSG). Over residues 490–507 (QDPRASDYDLPRASDYDL) the composition is skewed to basic and acidic residues.

The protein to C.muridarum TC_0268.

This is an uncharacterized protein from Chlamydia trachomatis serovar D (strain ATCC VR-885 / DSM 19411 / UW-3/Cx).